We begin with the raw amino-acid sequence, 570 residues long: Sulfite reductase [NADPH] hemoprotein beta-component (570 aa).

4 residues coordinate [4Fe-4S] cluster: C434, C440, C479, and C483. C483 contacts siroheme.

Belongs to the nitrite and sulfite reductase 4Fe-4S domain family. In terms of assembly, alpha(8)-beta(8). The alpha component is a flavoprotein, the beta component is a hemoprotein. Siroheme is required as a cofactor. The cofactor is [4Fe-4S] cluster.

The catalysed reaction is hydrogen sulfide + 3 NADP(+) + 3 H2O = sulfite + 3 NADPH + 4 H(+). Its pathway is sulfur metabolism; hydrogen sulfide biosynthesis; hydrogen sulfide from sulfite (NADPH route): step 1/1. Component of the sulfite reductase complex that catalyzes the 6-electron reduction of sulfite to sulfide. This is one of several activities required for the biosynthesis of L-cysteine from sulfate. The chain is Sulfite reductase [NADPH] hemoprotein beta-component from Escherichia coli O6:H1 (strain CFT073 / ATCC 700928 / UPEC).